The chain runs to 488 residues: Protein nucleotidyltransferase YdiU (488 aa).

Positions 91, 93, 94, 114, 126, 127, 177, and 184 each coordinate ATP. Aspartate 253 acts as the Proton acceptor in catalysis. Residues asparagine 254 and aspartate 263 each coordinate Mg(2+). Aspartate 263 is a binding site for ATP.

The protein belongs to the SELO family. Mg(2+) serves as cofactor. Requires Mn(2+) as cofactor.

It catalyses the reaction L-seryl-[protein] + ATP = 3-O-(5'-adenylyl)-L-seryl-[protein] + diphosphate. It carries out the reaction L-threonyl-[protein] + ATP = 3-O-(5'-adenylyl)-L-threonyl-[protein] + diphosphate. The enzyme catalyses L-tyrosyl-[protein] + ATP = O-(5'-adenylyl)-L-tyrosyl-[protein] + diphosphate. The catalysed reaction is L-histidyl-[protein] + UTP = N(tele)-(5'-uridylyl)-L-histidyl-[protein] + diphosphate. It catalyses the reaction L-seryl-[protein] + UTP = O-(5'-uridylyl)-L-seryl-[protein] + diphosphate. It carries out the reaction L-tyrosyl-[protein] + UTP = O-(5'-uridylyl)-L-tyrosyl-[protein] + diphosphate. Functionally, nucleotidyltransferase involved in the post-translational modification of proteins. It can catalyze the addition of adenosine monophosphate (AMP) or uridine monophosphate (UMP) to a protein, resulting in modifications known as AMPylation and UMPylation. The sequence is that of Protein nucleotidyltransferase YdiU from Bacillus thuringiensis subsp. konkukian (strain 97-27).